A 541-amino-acid chain; its full sequence is Arginine--tRNA ligase (541 aa).

Positions 123–133 (ANPTGFLHIGH) match the 'HIGH' region motif.

It belongs to the class-I aminoacyl-tRNA synthetase family. In terms of assembly, monomer.

It localises to the cytoplasm. It carries out the reaction tRNA(Arg) + L-arginine + ATP = L-arginyl-tRNA(Arg) + AMP + diphosphate. The protein is Arginine--tRNA ligase of Metamycoplasma arthritidis (strain 158L3-1) (Mycoplasma arthritidis).